The sequence spans 202 residues: Superoxide dismutase [Mn] (202 aa).

Mn(2+) is bound by residues His-27, His-82, Asp-164, and His-168.

It belongs to the iron/manganese superoxide dismutase family. In terms of assembly, homodimer. Requires Mn(2+) as cofactor.

It catalyses the reaction 2 superoxide + 2 H(+) = H2O2 + O2. In terms of biological role, destroys superoxide anion radicals which are normally produced within the cells and which are toxic to biological systems. This Listeria monocytogenes serovar 1/2a (strain ATCC BAA-679 / EGD-e) protein is Superoxide dismutase [Mn] (sodA).